Reading from the N-terminus, the 132-residue chain is Small ribosomal subunit protein uS11 (132 aa).

It belongs to the universal ribosomal protein uS11 family. As to quaternary structure, part of the 30S ribosomal subunit.

Functionally, located on the platform of the 30S subunit. The polypeptide is Small ribosomal subunit protein uS11 (Sulfolobus acidocaldarius (strain ATCC 33909 / DSM 639 / JCM 8929 / NBRC 15157 / NCIMB 11770)).